The primary structure comprises 269 residues: Hydroxyethylthiazole kinase (269 aa).

Met46 contacts substrate. The ATP site is built by Arg122 and Thr168. Gly195 is a substrate binding site.

This sequence belongs to the Thz kinase family. Mg(2+) serves as cofactor.

The enzyme catalyses 5-(2-hydroxyethyl)-4-methylthiazole + ATP = 4-methyl-5-(2-phosphooxyethyl)-thiazole + ADP + H(+). It functions in the pathway cofactor biosynthesis; thiamine diphosphate biosynthesis; 4-methyl-5-(2-phosphoethyl)-thiazole from 5-(2-hydroxyethyl)-4-methylthiazole: step 1/1. Catalyzes the phosphorylation of the hydroxyl group of 4-methyl-5-beta-hydroxyethylthiazole (THZ). In Geobacillus kaustophilus (strain HTA426), this protein is Hydroxyethylthiazole kinase.